The sequence spans 427 residues: Serine hydroxymethyltransferase (427 aa).

Residues Leu-117 and 121–123 (GHL) contribute to the (6S)-5,6,7,8-tetrahydrofolate site. Lys-226 is modified (N6-(pyridoxal phosphate)lysine).

The protein belongs to the SHMT family. Homodimer. The cofactor is pyridoxal 5'-phosphate.

It localises to the cytoplasm. The catalysed reaction is (6R)-5,10-methylene-5,6,7,8-tetrahydrofolate + glycine + H2O = (6S)-5,6,7,8-tetrahydrofolate + L-serine. The enzyme catalyses L-threonine = acetaldehyde + glycine. It carries out the reaction L-allo-threonine = acetaldehyde + glycine. It functions in the pathway one-carbon metabolism; tetrahydrofolate interconversion. Its pathway is amino-acid biosynthesis; glycine biosynthesis; glycine from L-serine: step 1/1. Its function is as follows. Its primary function is to catalyze the reversible interconversion of serine and glycine with tetrahydrofolate (THF) serving as the one-carbon carrier. This reaction serves as the major source of one-carbon groups required for the biosynthesis of purines, thymidylate, methionine, and other important biomolecules. Also exhibits THF-independent aldolase activity toward beta-hydroxyamino acids, producing glycine and aldehydes, via a retro-aldol mechanism. Thus, is able to catalyze the cleavage of L-threonine, L-allo-threonine, L-threo-beta-phenylserine and L-erythro-beta-phenylserine. This second activity is likely to be physiological in H.thermophilus, which is an organism that lacks the ortholog gene for the 'real' threonine aldolase characterized in mesophilic bacteria (LtaE), yeast and plants. The polypeptide is Serine hydroxymethyltransferase (Hydrogenobacter thermophilus (strain DSM 6534 / IAM 12695 / TK-6)).